The primary structure comprises 300 residues: ESX-5 secretion-associated protein EspG5 (300 aa).

It belongs to the EspG family. Interacts specifically with ESX-5-dependent PE/PPE proteins. Forms a 1:1:1 heterotrimeric complex with the PE25/PPE41 dimer, via PPE41. Binding of EspG5 does not cause conformational changes in the PE25/PPE41 dimer. Forms a 1:1:1 heterotrimeric complex with the PE8/PPE15 dimer, via PPE15.

Its subcellular location is the cytoplasm. In terms of biological role, specific chaperone for cognate PE/PPE proteins. Plays an important role in preventing aggregation of PE/PPE dimers. The chain is ESX-5 secretion-associated protein EspG5 from Mycobacterium tuberculosis (strain ATCC 25618 / H37Rv).